A 301-amino-acid chain; its full sequence is Transcriptional activator protein NhaR (301 aa).

The HTH lysR-type domain maps to 6-63 (INYNHLYYFWHVYKEGSVVGAAEALYLTPQTITGQIRALEERLQGKLFKRKGRGLEPS). The H-T-H motif DNA-binding region spans 23–42 (VVGAAEALYLTPQTITGQIR).

This sequence belongs to the LysR transcriptional regulatory family.

It is found in the cytoplasm. In terms of biological role, plays a role in the positive regulation of NhaA. The protein is Transcriptional activator protein NhaR (nhaR) of Escherichia coli (strain K12).